Here is a 424-residue protein sequence, read N- to C-terminus: Adenylosuccinate synthetase (424 aa).

Residues Gly-11 to Lys-17 and Gly-39 to Thr-41 contribute to the GTP site. Catalysis depends on Asp-12, which acts as the Proton acceptor. 2 residues coordinate Mg(2+): Asp-12 and Gly-39. IMP is bound by residues Asp-12–Lys-15, Asn-37–His-40, Thr-127, Arg-141, Gln-223, Thr-238, and Arg-302. His-40 acts as the Proton donor in catalysis. Residue Thr-298 to Arg-304 participates in substrate binding. Residues Arg-304, Lys-330–Asp-332, and Ser-412–Gly-414 contribute to the GTP site.

It belongs to the adenylosuccinate synthetase family. In terms of assembly, homodimer. Mg(2+) is required as a cofactor.

The protein localises to the cytoplasm. It catalyses the reaction IMP + L-aspartate + GTP = N(6)-(1,2-dicarboxyethyl)-AMP + GDP + phosphate + 2 H(+). It functions in the pathway purine metabolism; AMP biosynthesis via de novo pathway; AMP from IMP: step 1/2. In terms of biological role, plays an important role in the de novo pathway of purine nucleotide biosynthesis. Catalyzes the first committed step in the biosynthesis of AMP from IMP. The sequence is that of Adenylosuccinate synthetase from Methanosarcina barkeri (strain Fusaro / DSM 804).